We begin with the raw amino-acid sequence, 103 residues long: Transcriptional regulator WhiB7 (103 aa).

[4Fe-4S] cluster is bound by residues cysteine 17, cysteine 49, cysteine 52, and cysteine 58. The 4Fe-4S Wbl-type domain maps to 25–82 (PCHVGDPDLWFAENPGDLERAKALCAGCPIRVQCLTAALERQEPWGVWGGEILDRGSI). Residues 82-103 (IVARKRPRGRPRKDSGGNPAAA) form a disordered region.

The protein belongs to the WhiB family. Requires [4Fe-4S] cluster as cofactor. In terms of processing, the Fe-S cluster can be nitrosylated by nitric oxide (NO). Upon Fe-S cluster removal intramolecular disulfide bonds are formed.

The protein localises to the cytoplasm. In terms of biological role, acts as a transcriptional regulator. Probably redox-responsive. The apo- but not holo-form probably binds DNA. Participates in maintaining a reduced cytoplasmic (MSH/MSSM) environment under normal growth conditions and directly or indirectly controls the concentration of mycothiol (MSH + MSSM). The chain is Transcriptional regulator WhiB7 (whiB7) from Mycolicibacterium smegmatis (strain ATCC 700084 / mc(2)155) (Mycobacterium smegmatis).